A 96-amino-acid polypeptide reads, in one-letter code: UPF0235 protein Acid345_4205 (96 aa).

It belongs to the UPF0235 family.

The protein is UPF0235 protein Acid345_4205 of Koribacter versatilis (strain Ellin345).